An 83-amino-acid chain; its full sequence is Cytochrome c oxidase subunit 7A2, mitochondrial (83 aa).

Residues 1 to 23 constitute a mitochondrion transit peptide; it reads MLRNLLALRQIGQRTISTASRRH. Residues 24–48 are Mitochondrial matrix-facing; that stretch reads FKNKVPEKQKLFQEDDEIPLYLKGG. At Lys33 the chain carries N6-acetyllysine. A helical transmembrane segment spans residues 49–77; it reads VADALLYRATMILTVGGTAYAIYELAVAS. The Mitochondrial intermembrane segment spans residues 78–83; sequence FPKKQE.

It belongs to the cytochrome c oxidase VIIa family. Component of the cytochrome c oxidase (complex IV, CIV), a multisubunit enzyme composed of 14 subunits. The complex is composed of a catalytic core of 3 subunits MT-CO1, MT-CO2 and MT-CO3, encoded in the mitochondrial DNA, and 11 supernumerary subunits COX4I1 (or COX4I2), COX5A, COX5B, COX6A1 (or COX6A2), COX6B1 (or COX6B2), COX6C, COX7A2 (or COX7A1), COX7B, COX7C, COX8A and NDUFA4, which are encoded in the nuclear genome. The complex exists as a monomer or a dimer and forms supercomplexes (SCs) in the inner mitochondrial membrane with NADH-ubiquinone oxidoreductase (complex I, CI) and ubiquinol-cytochrome c oxidoreductase (cytochrome b-c1 complex, complex III, CIII), resulting in different assemblies (supercomplex SCI(1)III(2)IV(1) and megacomplex MCI(2)III(2)IV(2)). Interacts with PET100.

It localises to the mitochondrion inner membrane. Its pathway is energy metabolism; oxidative phosphorylation. Component of the cytochrome c oxidase, the last enzyme in the mitochondrial electron transport chain which drives oxidative phosphorylation. The respiratory chain contains 3 multisubunit complexes succinate dehydrogenase (complex II, CII), ubiquinol-cytochrome c oxidoreductase (cytochrome b-c1 complex, complex III, CIII) and cytochrome c oxidase (complex IV, CIV), that cooperate to transfer electrons derived from NADH and succinate to molecular oxygen, creating an electrochemical gradient over the inner membrane that drives transmembrane transport and the ATP synthase. Cytochrome c oxidase is the component of the respiratory chain that catalyzes the reduction of oxygen to water. Electrons originating from reduced cytochrome c in the intermembrane space (IMS) are transferred via the dinuclear copper A center (CU(A)) of subunit 2 and heme A of subunit 1 to the active site in subunit 1, a binuclear center (BNC) formed by heme A3 and copper B (CU(B)). The BNC reduces molecular oxygen to 2 water molecules using 4 electrons from cytochrome c in the IMS and 4 protons from the mitochondrial matrix. The chain is Cytochrome c oxidase subunit 7A2, mitochondrial (COX7A2) from Homo sapiens (Human).